The following is a 339-amino-acid chain: N-acetyl-gamma-glutamyl-phosphate reductase (339 aa).

The active site involves Cys145.

It belongs to the NAGSA dehydrogenase family. Type 1 subfamily.

Its subcellular location is the cytoplasm. The enzyme catalyses N-acetyl-L-glutamate 5-semialdehyde + phosphate + NADP(+) = N-acetyl-L-glutamyl 5-phosphate + NADPH + H(+). It participates in amino-acid biosynthesis; L-arginine biosynthesis; N(2)-acetyl-L-ornithine from L-glutamate: step 3/4. Its function is as follows. Catalyzes the NADPH-dependent reduction of N-acetyl-5-glutamyl phosphate to yield N-acetyl-L-glutamate 5-semialdehyde. This Kosmotoga olearia (strain ATCC BAA-1733 / DSM 21960 / TBF 19.5.1) protein is N-acetyl-gamma-glutamyl-phosphate reductase.